The following is a 248-amino-acid chain: Triosephosphate isomerase (248 aa).

2 residues coordinate substrate: Asn-11 and Lys-13. Residue His-95 is the Electrophile of the active site. Catalysis depends on Glu-165, which acts as the Proton acceptor.

This sequence belongs to the triosephosphate isomerase family. As to quaternary structure, homodimer.

It localises to the cytoplasm. The enzyme catalyses dihydroxyacetone phosphate = methylglyoxal + phosphate. The catalysed reaction is D-glyceraldehyde 3-phosphate = dihydroxyacetone phosphate. The protein operates within carbohydrate degradation; glycolysis; D-glyceraldehyde 3-phosphate from glycerone phosphate: step 1/1. It participates in carbohydrate biosynthesis; gluconeogenesis. Triosephosphate isomerase is an extremely efficient metabolic enzyme that catalyzes the interconversion between dihydroxyacetone phosphate (DHAP) and D-glyceraldehyde-3-phosphate (G3P) in glycolysis and gluconeogenesis. Its function is as follows. It is also responsible for the non-negligible production of methylglyoxal a reactive cytotoxic side-product that modifies and can alter proteins, DNA and lipids. This is Triosephosphate isomerase (tpi1) from Xenopus tropicalis (Western clawed frog).